Reading from the N-terminus, the 196-residue chain is ATP-dependent Clp protease proteolytic subunit (196 aa).

S101 acts as the Nucleophile in catalysis. H126 is an active-site residue.

The protein belongs to the peptidase S14 family. As to quaternary structure, component of the chloroplastic Clp protease core complex.

It localises to the plastid. The protein localises to the chloroplast stroma. The enzyme catalyses Hydrolysis of proteins to small peptides in the presence of ATP and magnesium. alpha-casein is the usual test substrate. In the absence of ATP, only oligopeptides shorter than five residues are hydrolyzed (such as succinyl-Leu-Tyr-|-NHMec, and Leu-Tyr-Leu-|-Tyr-Trp, in which cleavage of the -Tyr-|-Leu- and -Tyr-|-Trp bonds also occurs).. Its function is as follows. Cleaves peptides in various proteins in a process that requires ATP hydrolysis. Has a chymotrypsin-like activity. Plays a major role in the degradation of misfolded proteins. This Spinacia oleracea (Spinach) protein is ATP-dependent Clp protease proteolytic subunit.